The primary structure comprises 106 residues: Adipokinetic hormone/corazonin-related peptide (106 aa).

The first 25 residues, 1 to 25 (MRNSIYKLIMFAVLCMVLTSSLSYA), serve as a signal peptide directing secretion. A Pyrrolidone carboxylic acid modification is found at Gln26. Ala35 is modified (alanine amide). Residues 39-106 (SLAEAAQSTG…GLPLFSNGHL (68 aa)) constitute a propeptide that is removed on maturation.

The protein belongs to the AKH/HRTH/RPCH family. In terms of tissue distribution, only expressed in the head and thorax body segments of adults. Is more expressed in adult males than in females.

The protein resides in the secreted. In terms of biological role, neuropeptide with neuromodulator or neurotransmitter role that activates the adipokinetic hormone/corazonin-related peptide receptor (ACPR). May function in regulation of post-ecdysis activities. Does not activate the A.gambiae adipokinetic hormone (AKH) and corazonin (CRZ) receptors. The sequence is that of Adipokinetic hormone/corazonin-related peptide from Aedes aegypti (Yellowfever mosquito).